We begin with the raw amino-acid sequence, 508 residues long: MGLPWYRVHTVVLNDPGRLLAVHIMHTALVAGWAGSMALYELAVFDPSDPVLDPMWRQGMFVIPFMTRLGITSSWGGWSITGGATPNPGIWSYEGVAGAHIVFSGLCFLAAIWHWTYWDLAIFCDERTGKPSLDLPKIFGIHLFLAGLACFGFGAFHVTGLYGPGIWVSDPYGLTGKVQSVNPAWGVEGFDPFVPGGIASHHIAAGTLGILAGLFHLSVRPPQRLYKGLRMGNIETVLSSSIAAVFFAAFVVAGTMWYGSATTPIELFGPTRYQWDQGYFQQEIYRRVSAGLAENQSLSEAWSKIPEKLAFYDYIGNNPAKGGLFRAGSMDNGDGIAVGWLGHPIFRDKEGRELFVRRMPTFFETFPVVLVDGDGIVRADVPFRRAESKYSVEQVGVTVEFYGGELNGVSYSDPATVKKYARRAQLGEIFELDRATLKSDGVFRSSPRGWFTFGHASFALLFFFGHIWHGARTLFRDVFAGIDPDLDAQVEFGAFQKLGDPTTRRQTV.

A run of 6 helical transmembrane segments spans residues 21–36, 101–115, 140–156, 203–218, 237–252, and 457–472; these read AVHIMHTALVAGWAGS, IVFSGLCFLAAIWHW, GIHLFLAGLACFGFGAF, IAAGTLGILAGLFHLS, VLSSSIAAVFFAAFVV, and SFALLFFFGHIWHGAR.

It belongs to the PsbB/PsbC family. PsbB subfamily. As to quaternary structure, PSII is composed of 1 copy each of membrane proteins PsbA, PsbB, PsbC, PsbD, PsbE, PsbF, PsbH, PsbI, PsbJ, PsbK, PsbL, PsbM, PsbT, PsbX, PsbY, PsbZ, Psb30/Ycf12, at least 3 peripheral proteins of the oxygen-evolving complex and a large number of cofactors. It forms dimeric complexes. The cofactor is Binds multiple chlorophylls. PSII binds additional chlorophylls, carotenoids and specific lipids..

The protein localises to the plastid. It is found in the chloroplast thylakoid membrane. Functionally, one of the components of the core complex of photosystem II (PSII). It binds chlorophyll and helps catalyze the primary light-induced photochemical processes of PSII. PSII is a light-driven water:plastoquinone oxidoreductase, using light energy to abstract electrons from H(2)O, generating O(2) and a proton gradient subsequently used for ATP formation. The protein is Photosystem II CP47 reaction center protein of Daucus carota (Wild carrot).